Consider the following 241-residue polypeptide: 6-phosphogluconolactonase (241 aa).

It belongs to the glucosamine/galactosamine-6-phosphate isomerase family. 6-phosphogluconolactonase subfamily.

The catalysed reaction is 6-phospho-D-glucono-1,5-lactone + H2O = 6-phospho-D-gluconate + H(+). It participates in carbohydrate degradation; pentose phosphate pathway; D-ribulose 5-phosphate from D-glucose 6-phosphate (oxidative stage): step 2/3. Hydrolysis of 6-phosphogluconolactone to 6-phosphogluconate. The chain is 6-phosphogluconolactonase (pgl) from Treponema pallidum (strain Nichols).